A 147-amino-acid chain; its full sequence is Large ribosomal subunit protein uL13 (147 aa).

The protein belongs to the universal ribosomal protein uL13 family. As to quaternary structure, part of the 50S ribosomal subunit.

In terms of biological role, this protein is one of the early assembly proteins of the 50S ribosomal subunit, although it is not seen to bind rRNA by itself. It is important during the early stages of 50S assembly. In Nocardioides sp. (strain ATCC BAA-499 / JS614), this protein is Large ribosomal subunit protein uL13.